An 85-amino-acid chain; its full sequence is ATP synthase epsilon chain (85 aa).

This sequence belongs to the ATPase epsilon chain family. F-type ATPases have 2 components, CF(1) - the catalytic core - and CF(0) - the membrane proton channel. CF(1) has five subunits: alpha(3), beta(3), gamma(1), delta(1), epsilon(1). CF(0) has three main subunits: a, b and c.

Its subcellular location is the cell membrane. In terms of biological role, produces ATP from ADP in the presence of a proton gradient across the membrane. In Frankia casuarinae (strain DSM 45818 / CECT 9043 / HFP020203 / CcI3), this protein is ATP synthase epsilon chain.